Reading from the N-terminus, the 660-residue chain is Bifunctional polymyxin resistance protein ArnA (660 aa).

Positions 1–304 (MKAVIFAYHD…TLGLVAGARL (304 aa)) are formyltransferase ArnAFT. The Proton donor; for formyltransferase activity role is filled by His-104. Residues Arg-114 and 136-140 (VKRAD) each bind (6R)-10-formyltetrahydrofolate. A dehydrogenase ArnADH region spans residues 314-660 (RRIRVLILGV…RSVDVAERAS (347 aa)). NAD(+) contacts are provided by residues Asp-347 and 368–369 (DI). Residues Ala-393, Tyr-398, and 432–433 (TS) each bind UDP-alpha-D-glucuronate. Glu-434 (proton acceptor; for decarboxylase activity) is an active-site residue. UDP-alpha-D-glucuronate contacts are provided by residues Arg-460, Asn-492, 526-535 (KLIDGGQQKR), and Tyr-613. Residue Arg-619 is the Proton donor; for decarboxylase activity of the active site.

The protein in the N-terminal section; belongs to the Fmt family. UDP-L-Ara4N formyltransferase subfamily. This sequence in the C-terminal section; belongs to the NAD(P)-dependent epimerase/dehydratase family. UDP-glucuronic acid decarboxylase subfamily. As to quaternary structure, homohexamer, formed by a dimer of trimers.

It catalyses the reaction UDP-alpha-D-glucuronate + NAD(+) = UDP-beta-L-threo-pentopyranos-4-ulose + CO2 + NADH. The catalysed reaction is UDP-4-amino-4-deoxy-beta-L-arabinose + (6R)-10-formyltetrahydrofolate = UDP-4-deoxy-4-formamido-beta-L-arabinose + (6S)-5,6,7,8-tetrahydrofolate + H(+). The protein operates within nucleotide-sugar biosynthesis; UDP-4-deoxy-4-formamido-beta-L-arabinose biosynthesis; UDP-4-deoxy-4-formamido-beta-L-arabinose from UDP-alpha-D-glucuronate: step 1/3. Its pathway is nucleotide-sugar biosynthesis; UDP-4-deoxy-4-formamido-beta-L-arabinose biosynthesis; UDP-4-deoxy-4-formamido-beta-L-arabinose from UDP-alpha-D-glucuronate: step 3/3. It functions in the pathway bacterial outer membrane biogenesis; lipopolysaccharide biosynthesis. Functionally, bifunctional enzyme that catalyzes the oxidative decarboxylation of UDP-glucuronic acid (UDP-GlcUA) to UDP-4-keto-arabinose (UDP-Ara4O) and the addition of a formyl group to UDP-4-amino-4-deoxy-L-arabinose (UDP-L-Ara4N) to form UDP-L-4-formamido-arabinose (UDP-L-Ara4FN). The modified arabinose is attached to lipid A and is required for resistance to polymyxin and cationic antimicrobial peptides. This chain is Bifunctional polymyxin resistance protein ArnA, found in Salmonella paratyphi C (strain RKS4594).